The primary structure comprises 21 residues: Fibrinogen beta chain (21 aa).

A Pyrrolidone carboxylic acid modification is found at Gln1. A compositionally biased stretch (acidic residues) spans 1–10 (QFPTDYDEGQ). The disordered stretch occupies residues 1 to 21 (QFPTDYDEGQDDRPKLGLGAR). Thr4 carries O-linked (GalNAc...) threonine glycosylation. Residue Tyr6 is modified to Sulfotyrosine.

In terms of assembly, heterohexamer; disulfide linked. Contains 2 sets of 3 non-identical chains (alpha, beta and gamma). The 2 heterotrimers are in head to head conformation with the N-termini in a small central domain. Conversion of fibrinogen to fibrin is triggered by thrombin, which cleaves fibrinopeptides A and B from alpha and beta chains, and thus exposes the N-terminal polymerization sites responsible for the formation of the soft clot.

The protein localises to the secreted. In terms of biological role, cleaved by the protease thrombin to yield monomers which, together with fibrinogen alpha (FGA) and fibrinogen gamma (FGG), polymerize to form an insoluble fibrin matrix. Fibrin has a major function in hemostasis as one of the primary components of blood clots. In addition, functions during the early stages of wound repair to stabilize the lesion and guide cell migration during re-epithelialization. Was originally thought to be essential for platelet aggregation, based on in vitro studies using anticoagulated blood. However subsequent studies have shown that it is not absolutely required for thrombus formation in vivo. Enhances expression of SELP in activated platelets. Maternal fibrinogen is essential for successful pregnancy. Fibrin deposition is also associated with infection, where it protects against IFNG-mediated hemorrhage. May also facilitate the antibacterial immune response via both innate and T-cell mediated pathways. In Bubalus bubalis (Domestic water buffalo), this protein is Fibrinogen beta chain (FGB).